The primary structure comprises 461 residues: 3-oxoacyl-[acyl-carrier-protein] synthase, mitochondrial (461 aa).

Residues 1–28 constitute a mitochondrion transit peptide; that stretch reads MATSNLRRHLSASRLRLNRFISTSSSYH. The region spanning 30–460 is the Ketosynthase family 3 (KS3) domain; it reads HRRVVVTGLG…GTNASLLFAS (431 aa). Residues cysteine 209, histidine 350, and histidine 389 each act as for beta-ketoacyl synthase activity in the active site.

This sequence belongs to the thiolase-like superfamily. Beta-ketoacyl-ACP synthases family. Homodimer. In terms of tissue distribution, expressed at the same level in leaves, roots, siliques and flowers.

The protein localises to the mitochondrion. The enzyme catalyses a fatty acyl-[ACP] + malonyl-[ACP] + H(+) = a 3-oxoacyl-[ACP] + holo-[ACP] + CO2. It catalyses the reaction butanoyl-[ACP] + malonyl-[ACP] + H(+) = 3-oxohexanoyl-[ACP] + holo-[ACP] + CO2. It carries out the reaction hexanoyl-[ACP] + malonyl-[ACP] + H(+) = 3-oxooctanoyl-[ACP] + holo-[ACP] + CO2. The catalysed reaction is octanoyl-[ACP] + malonyl-[ACP] + H(+) = 3-oxodecanoyl-[ACP] + holo-[ACP] + CO2. The enzyme catalyses decanoyl-[ACP] + malonyl-[ACP] + H(+) = 3-oxododecanoyl-[ACP] + holo-[ACP] + CO2. It catalyses the reaction dodecanoyl-[ACP] + malonyl-[ACP] + H(+) = 3-oxotetradecanoyl-[ACP] + holo-[ACP] + CO2. It carries out the reaction tetradecanoyl-[ACP] + malonyl-[ACP] + H(+) = 3-oxohexadecanoyl-[ACP] + holo-[ACP] + CO2. The catalysed reaction is hexadecanoyl-[ACP] + malonyl-[ACP] + H(+) = 3-oxooctadecanoyl-[ACP] + holo-[ACP] + CO2. The protein operates within lipid metabolism; fatty acid biosynthesis. Inhibited by cerulenin. Functionally, catalyzes all the condensation reaction of fatty acid synthesis by the addition to an acyl acceptor of two carbons from malonyl-ACP. Able to elongate saturated acyl chains from 4 to at least 16 carbons. Uses malonyl-CoA but not acetyl-CoA as primer substrate. When expressed in a heterologous system, reveals a bimodal distribution of products, with peaks at C8 and C14-C16. The major product of the reaction (octanoyl-ACP) is required for the lipoylation of essential mitochondrial proteins. Required for mitochondrial fatty acid synthesis (mtFAS). MtFAS are essential for photorespiration and plant development, probably by influencing mitochondrial membrane lipid composition and other lipid metabolic pathways. The protein is 3-oxoacyl-[acyl-carrier-protein] synthase, mitochondrial of Arabidopsis thaliana (Mouse-ear cress).